We begin with the raw amino-acid sequence, 449 residues long: Rubisco accumulation factor 1.2, chloroplastic (449 aa).

The transit peptide at 1–61 (MFSLKSLISS…NMIPKNPPAR (61 aa)) directs the protein to the chloroplast. The segment at 75–264 (IPTQFRSLDS…KAKNRLNTEL (190 aa)) is N-terminal alpha-helix. Residues 262–288 (TELYGDKEAEKEKEKKKKEEEVKAIRI) are a coiled coil. A C-terminal beta sheet region spans residues 288–434 (IPVVRLKFGE…GMVVLVVRPP (147 aa)).

It belongs to the RAF family. Homodimer.

It is found in the plastid. It localises to the chloroplast. Required for assembly or stability of RuBisCO. Acts at a postchaperonin step to fold and/or assemble the large subunit (rbcL) into RuBisCO. RAF1 brackets an rbcL dimer (rbcL(2)), leading to rbcL(8)-RAF1(4) complex formation. In the next step, RBCS displaces RAF1, thus resulting in holoenzyme formation. The chain is Rubisco accumulation factor 1.2, chloroplastic from Arabidopsis thaliana (Mouse-ear cress).